Reading from the N-terminus, the 388-residue chain is MRTLRRLKFMSSPSLSDLGKREPAAAADERGTQQRRACANATWNSIHNGVIAVFQRKGLPDQELFSLNEGVRQLLKTELGSFFTEYLQNQLLTKGMVILRDKIRFYEGQKLLDSLAETWDFFFSDVLPMLQAIFYPVQGKEPSVRQLALLHFRNAITLSVKLEDALARAHARVPPAIVQMLLVLQGVHESRGVTEDYLRLETLVQKVVSPYLGTYGLHSSEGPFTHSCILEKRLLRRSRSGDVLAKNPVVRSKSYNTPLLNPVQEHEAEGAAAGGTSIRRHSVSEMTSCPEPQGFSDPPGQGPTGTFRSSPAPHSGPCPSRLYPTTQPPEQGLDPTRSSLPRSSPENLVDQILESVDSDSEGIFIDFGRGRGSGMSDLEGSGGRQSVV.

Interaction with RICTOR regions lie at residues 10–95 (MSSP…LTKG) and 188–218 (HESR…YGLH). The segment at 12–31 (SPSLSDLGKREPAAAADERG) is disordered. Residues 18–31 (LGKREPAAAADERG) show a composition bias toward basic and acidic residues. Position 252 is a phosphoserine (S252). The tract at residues 254 to 388 (SYNTPLLNPV…EGSGGRQSVV (135 aa)) is disordered. Positions 336–346 (TRSSLPRSSPE) are enriched in polar residues.

Belongs to the PROTOR family. Associated component of the mechanistic target of rapamycin complex 2 (mTORC2). Binds directly to MTOR and RICTOR within the TORC2 complex. In terms of tissue distribution, most abundant in kidney and liver. Also highly expressed in brain, spleen, testis and placenta. Overexpressed in several colorectal tumors.

Functionally, associated subunit of mTORC2, which regulates cell growth and survival in response to hormonal signals. mTORC2 is activated by growth factors, but, in contrast to mTORC1, seems to be nutrient-insensitive. mTORC2 seems to function upstream of Rho GTPases to regulate the actin cytoskeleton, probably by activating one or more Rho-type guanine nucleotide exchange factors. PRR5 plays an important role in regulation of PDGFRB expression and in modulation of platelet-derived growth factor signaling. May act as a tumor suppressor in breast cancer. This is Proline-rich protein 5 (PRR5) from Homo sapiens (Human).